A 451-amino-acid polypeptide reads, in one-letter code: Bifunctional protein GlmU (451 aa).

Positions 1–229 (MQRHAIILAA…FDEIIGVNDR (229 aa)) are pyrophosphorylase. UDP-N-acetyl-alpha-D-glucosamine-binding positions include 8–11 (LAAG), lysine 22, glutamine 72, and 77–78 (GT). Aspartate 102 contacts Mg(2+). Glycine 139, glutamate 154, and asparagine 227 together coordinate UDP-N-acetyl-alpha-D-glucosamine. Residue asparagine 227 coordinates Mg(2+). The interval 230-250 (LMLSEAEKALQQRINRYHMEN) is linker. The tract at residues 251–451 (GVTIIDPSST…QVNKEGYLKK (201 aa)) is N-acetyltransferase. UDP-N-acetyl-alpha-D-glucosamine-binding residues include arginine 332 and lysine 350. Histidine 362 (proton acceptor) is an active-site residue. Residues tyrosine 365 and asparagine 376 each contribute to the UDP-N-acetyl-alpha-D-glucosamine site. Residues 385–386 (NY), alanine 422, and arginine 439 contribute to the acetyl-CoA site.

The protein in the N-terminal section; belongs to the N-acetylglucosamine-1-phosphate uridyltransferase family. In the C-terminal section; belongs to the transferase hexapeptide repeat family. As to quaternary structure, homotrimer. The cofactor is Mg(2+).

Its subcellular location is the cytoplasm. It carries out the reaction alpha-D-glucosamine 1-phosphate + acetyl-CoA = N-acetyl-alpha-D-glucosamine 1-phosphate + CoA + H(+). The enzyme catalyses N-acetyl-alpha-D-glucosamine 1-phosphate + UTP + H(+) = UDP-N-acetyl-alpha-D-glucosamine + diphosphate. It participates in nucleotide-sugar biosynthesis; UDP-N-acetyl-alpha-D-glucosamine biosynthesis; N-acetyl-alpha-D-glucosamine 1-phosphate from alpha-D-glucosamine 6-phosphate (route II): step 2/2. It functions in the pathway nucleotide-sugar biosynthesis; UDP-N-acetyl-alpha-D-glucosamine biosynthesis; UDP-N-acetyl-alpha-D-glucosamine from N-acetyl-alpha-D-glucosamine 1-phosphate: step 1/1. The protein operates within bacterial outer membrane biogenesis; LPS lipid A biosynthesis. Functionally, catalyzes the last two sequential reactions in the de novo biosynthetic pathway for UDP-N-acetylglucosamine (UDP-GlcNAc). The C-terminal domain catalyzes the transfer of acetyl group from acetyl coenzyme A to glucosamine-1-phosphate (GlcN-1-P) to produce N-acetylglucosamine-1-phosphate (GlcNAc-1-P), which is converted into UDP-GlcNAc by the transfer of uridine 5-monophosphate (from uridine 5-triphosphate), a reaction catalyzed by the N-terminal domain. The chain is Bifunctional protein GlmU from Staphylococcus epidermidis.